We begin with the raw amino-acid sequence, 74 residues long: Peptide BmKb1 (74 aa).

The first 22 residues, 1–22, serve as a signal peptide directing secretion; it reads MEIKYLLTVFLVLLIVSDHCQA. The residue at position 40 (K40) is a Lysine amide. A propeptide spanning residues 46 to 74 is cleaved from the precursor; that stretch reads DLNGYIDHFKNFRKRDAELEELLSKLPIY.

The protein belongs to the non-disulfide-bridged peptide (NDBP) superfamily. Short antimicrobial peptide (group 4) family. In terms of tissue distribution, expressed by the venom gland.

The protein localises to the secreted. Its subcellular location is the target cell membrane. In terms of biological role, has antibacterial activity against Gram-positive bacteria S.aureus, M.luteus, B.subtilis, and Gram-negative bacteria E.coli, and P.aeruginosa. The sequence is that of Peptide BmKb1 from Olivierus martensii (Manchurian scorpion).